The primary structure comprises 505 residues: L-carnitine/gamma-butyrobetaine antiporter (505 aa).

12 helical membrane passes run 10 to 30, 51 to 71, 92 to 112, 143 to 163, 195 to 215, 231 to 251, 263 to 283, 316 to 336, 347 to 367, 403 to 423, 446 to 466, and 475 to 495; these read IEPK…WLTV, WGWA…WLVF, IFMM…SIEI, GPLP…FFFV, FYLV…TPLV, LDAI…ACGL, SYLS…SFIM, WTVF…IFLA, LCFG…TVLG, LSTA…VTLI, LLVR…LLAL, and AIIA…LSFI.

It belongs to the BCCT transporter (TC 2.A.15) family. CaiT subfamily. As to quaternary structure, homotrimer.

It localises to the cell inner membrane. The enzyme catalyses 4-(trimethylamino)butanoate(in) + (R)-carnitine(out) = 4-(trimethylamino)butanoate(out) + (R)-carnitine(in). The protein operates within amine and polyamine metabolism; carnitine metabolism. In terms of biological role, catalyzes the exchange of L-carnitine for gamma-butyrobetaine. In Salmonella choleraesuis (strain SC-B67), this protein is L-carnitine/gamma-butyrobetaine antiporter.